A 388-amino-acid chain; its full sequence is Chorismate synthase (388 aa).

NADP(+)-binding residues include R39 and R45. FMN is bound by residues 130–132 (RSS), 251–252 (NA), G296, 311–315 (KPIPT), and R337.

It belongs to the chorismate synthase family. In terms of assembly, homotetramer. Requires FMNH2 as cofactor.

It carries out the reaction 5-O-(1-carboxyvinyl)-3-phosphoshikimate = chorismate + phosphate. It functions in the pathway metabolic intermediate biosynthesis; chorismate biosynthesis; chorismate from D-erythrose 4-phosphate and phosphoenolpyruvate: step 7/7. Its function is as follows. Catalyzes the anti-1,4-elimination of the C-3 phosphate and the C-6 proR hydrogen from 5-enolpyruvylshikimate-3-phosphate (EPSP) to yield chorismate, which is the branch point compound that serves as the starting substrate for the three terminal pathways of aromatic amino acid biosynthesis. This reaction introduces a second double bond into the aromatic ring system. This chain is Chorismate synthase, found in Streptococcus suis (strain 98HAH33).